Here is a 312-residue protein sequence, read N- to C-terminus: Putative mitochondrial transporter UCP3 (312 aa).

Residues 1 to 10 (MVGLKPSDVP) are Mitochondrial intermembrane-facing. The chain crosses the membrane as a helical span at residues 11–32 (PTMAVKFLGAGTAACFADLVTF). Solcar repeat units lie at residues 11–105 (PTMA…VKQV), 114–206 (SSLT…LKEK), and 215–300 (DNFP…LKRA). The Mitochondrial matrix segment spans residues 33–76 (PLDTAKVRLQIQGENQAVQTARLVQYRGVLGTILTMVRTEGPCS). Residues 77-99 (PYNGLVAGLQRQMSFASIRIGLY) form a helical membrane-spanning segment. The Mitochondrial intermembrane portion of the chain corresponds to 100-119 (DSVKQVYTPKGADNSSLTTR). A helical membrane pass occupies residues 120 to 136 (ILAGCTTGAMAVTCAQP). The Mitochondrial matrix segment spans residues 137 to 183 (TDVVKVRFQASIHLGPSRSDRKYSGTMDAYRTIAREEGVRGLWKGTL). Residues 184-200 (PNIMRNAIVNCAEVVTY) form a helical membrane-spanning segment. Over 201–217 (DILKEKLLDYHLLTDNF) the chain is Mitochondrial intermembrane. A helical membrane pass occupies residues 218 to 237 (PCHFVSAFGAGFCATVVASP). At 238–271 (VDVVKTRYMNSPPGQYFSPLDCMIKMVAQEGPTA) the chain is on the mitochondrial matrix side. Residues 272–294 (FYKGFTPSFLRLGSWNVVMFVTY) form a helical membrane-spanning segment. Residues 279–301 (SFLRLGSWNVVMFVTYEQLKRAL) are purine nucleotide binding. The Mitochondrial intermembrane segment spans residues 295–312 (EQLKRALMKVQMLRESPF).

Belongs to the mitochondrial carrier (TC 2.A.29) family. Interacts with HAX1; the interaction is direct and calcium-dependent. In terms of tissue distribution, only in skeletal muscle and heart. Also expressed in white and brown adipose tissues. Is more expressed in glycolytic than in oxidative skeletal muscles.

It localises to the mitochondrion inner membrane. Its activity is regulated as follows. The proton transporter activity is activated by fatty acids (in vitro). The proton transporter activity is inhibited by ATP and ADP (in vitro). The effect of Ubiquinone/coenzyme Q10 on the proton transporter activity in reconstituted membranes is unclear (in vitro). Functionally, putative transmembrane transporter that plays a role in mitochondrial metabolism via an as yet unclear mechanism. Originally, this mitochondrial protein was thought to act as a proton transmembrane transporter from the mitochondrial intermembrane space into the matrix, causing proton leaks through the inner mitochondrial membrane, thereby uncoupling mitochondrial membrane potential generation from ATP synthesis. However, this function is controversial and uncoupling may not be the function, or at least not the main function, but rather a consequence of more conventional metabolite transporter activity. This chain is Putative mitochondrial transporter UCP3, found in Homo sapiens (Human).